Consider the following 315-residue polypeptide: Methionine import ATP-binding protein MetN (315 aa).

The ABC transporter domain occupies 2–219 (IEIEKVCVDF…PQHAFTQQLV (218 aa)). 16–23 (GTSGAGKS) contacts ATP.

Belongs to the ABC transporter superfamily. Methionine importer (TC 3.A.1.24) family. The complex is composed of two ATP-binding proteins (MetN), two transmembrane proteins (MetI) and a solute-binding protein (MetQ).

It is found in the cell inner membrane. The catalysed reaction is L-methionine(out) + ATP + H2O = L-methionine(in) + ADP + phosphate + H(+). It carries out the reaction D-methionine(out) + ATP + H2O = D-methionine(in) + ADP + phosphate + H(+). Its function is as follows. Part of the ABC transporter complex MetNIQ involved in methionine import. Responsible for energy coupling to the transport system. The chain is Methionine import ATP-binding protein MetN from Salmonella enteritidis.